The following is a 71-amino-acid chain: Large ribosomal subunit protein bL31 (71 aa).

The Zn(2+) site is built by C16, C18, C37, and C40.

Belongs to the bacterial ribosomal protein bL31 family. Type A subfamily. In terms of assembly, part of the 50S ribosomal subunit. The cofactor is Zn(2+).

Functionally, binds the 23S rRNA. The polypeptide is Large ribosomal subunit protein bL31 (Pseudomonas putida (strain GB-1)).